Consider the following 105-residue polypeptide: Large ribosomal subunit protein uL23 (105 aa).

This sequence belongs to the universal ribosomal protein uL23 family. In terms of assembly, part of the 50S ribosomal subunit. Contacts protein L29, and trigger factor when it is bound to the ribosome.

In terms of biological role, one of the early assembly proteins it binds 23S rRNA. One of the proteins that surrounds the polypeptide exit tunnel on the outside of the ribosome. Forms the main docking site for trigger factor binding to the ribosome. This Ureaplasma urealyticum serovar 10 (strain ATCC 33699 / Western) protein is Large ribosomal subunit protein uL23.